The following is a 172-amino-acid chain: MDVTIQHPWFKRTLGPFYPSRLFDQFFGEGLFEYDLLPFLSSTISPYYRQSLFRTVLDSGISEVRSDRDKFVIFLDVKHFSPEDLTVKVQDDFVEIHGKHNERQDDHGYISREFHRRYRLPSNVDQSALSCSLSADGMLTFSGPKIQTGLDATHERAIPVAREEKPSSAPSS.

Met1 carries the N-acetylmethionine modification. Residues 1–63 (MDVTIQHPWF…RTVLDSGISE (63 aa)) are required for complex formation with BFSP1 and BFSP2. Gln6 is subject to Deamidated glutamine; partial. Phosphoserine is present on Ser45. Gln50 carries the deamidated glutamine; partial modification. One can recognise a sHSP domain in the interval 52–163 (LFRTVLDSGI…HERAIPVARE (112 aa)). Lys70 is subject to N6-acetyllysine. At Gln90 the chain carries Deamidated glutamine; partial. Residue Lys99 is modified to N6-acetyllysine. His100 provides a ligand contact to Zn(2+). Residue Asn101 is modified to Deamidated asparagine; partial. Zn(2+)-binding residues include Glu102 and His107. Phosphoserine is present on Ser122. A Deamidated asparagine; partial modification is found at Asn123. Residue Gln147 is modified to Deamidated glutamine; partial. His154 serves as a coordination point for Zn(2+). A glycan (O-linked (GlcNAc) serine) is linked at Ser168.

This sequence belongs to the small heat shock protein (HSP20) family. As to quaternary structure, heteromer composed of three CRYAA and one CRYAB subunits. Inter-subunit bridging via zinc ions enhances stability, which is crucial as there is no protein turn over in the lens. Can also form homodimers and homotetramers (dimers of dimers) which serve as the building blocks of homooligomers. Within homooligomers, the zinc-binding motif is created from residues of 3 different molecules. His-100 and Glu-102 from one molecule are ligands of the zinc ion, and His-107 and His-154 residues from additional molecules complete the site with tetrahedral coordination geometry. Part of a complex required for lens intermediate filament formation composed of BFSP1, BFSP2 and CRYAA. Acetylation at Lys-70 may increase chaperone activity. Post-translationally, undergoes age-dependent proteolytical cleavage at the C-terminus.

The protein localises to the cytoplasm. Its subcellular location is the nucleus. Contributes to the transparency and refractive index of the lens. Acts as a chaperone, preventing aggregation of various proteins under a wide range of stress conditions. Required for the correct formation of lens intermediate filaments as part of a complex composed of BFSP1, BFSP2 and CRYAA. This is Alpha-crystallin A chain (CRYAA) from Macaca mulatta (Rhesus macaque).